The sequence spans 267 residues: Imidazole glycerol phosphate synthase subunit HisF (267 aa).

Catalysis depends on residues Asp21 and Asp140.

The protein belongs to the HisA/HisF family. As to quaternary structure, heterodimer of HisH and HisF.

Its subcellular location is the cytoplasm. The enzyme catalyses 5-[(5-phospho-1-deoxy-D-ribulos-1-ylimino)methylamino]-1-(5-phospho-beta-D-ribosyl)imidazole-4-carboxamide + L-glutamine = D-erythro-1-(imidazol-4-yl)glycerol 3-phosphate + 5-amino-1-(5-phospho-beta-D-ribosyl)imidazole-4-carboxamide + L-glutamate + H(+). It participates in amino-acid biosynthesis; L-histidine biosynthesis; L-histidine from 5-phospho-alpha-D-ribose 1-diphosphate: step 5/9. In terms of biological role, IGPS catalyzes the conversion of PRFAR and glutamine to IGP, AICAR and glutamate. The HisF subunit catalyzes the cyclization activity that produces IGP and AICAR from PRFAR using the ammonia provided by the HisH subunit. This Bordetella avium (strain 197N) protein is Imidazole glycerol phosphate synthase subunit HisF.